Reading from the N-terminus, the 245-residue chain is Endo-chitosanase (245 aa).

The first 17 residues, 1–17 (MHFAGIVAIALATGATA), serve as a signal peptide directing secretion.

The protein belongs to the glycosyl hydrolase 75 family.

The protein resides in the secreted. It carries out the reaction Endohydrolysis of beta-(1-&gt;4)-linkages between D-glucosamine residues in a partly acetylated chitosan.. In terms of biological role, chitosanase catalyzing the endo-type cleavage of chitosan, the deacylated form of chitin. Chitosanase may be crucial in the degradation of the deacetylated portion of chitin in the fungal cell wall. Chitoolisaccharides produced by the hydrolysis of partially N-acetylated chitosan are known to have many biological activities, including antibacterial activity, immune-enhancing effects, and elicitor activity. The chain is Endo-chitosanase (csn) from Aspergillus oryzae (strain ATCC 42149 / RIB 40) (Yellow koji mold).